Here is a 321-residue protein sequence, read N- to C-terminus: Agamous-like MADS-box protein AGL80 (321 aa).

One can recognise an MADS-box domain in the interval 1–61 (MTRKKVKLAY…DTNPEVWPSN (61 aa)). The stretch at 89–114 (FLKQRIAKATETLRRQRKDSRELEMT) forms a coiled coil.

In terms of assembly, interacts with AGL61 and AGL62. Forms a heterodimer with AGL61. Interacts with MEE14/CBP1. In terms of tissue distribution, expressed in the central cell of the female gametophyte and in early endosperm. Also detected in ovaries, young siliques, roots, leaves, stems, young flowers and anthers.

Its subcellular location is the nucleus. Probable transcription factor. Controls central cell differentiation during female gametophyte development. Required for the expression of DEMETER and DD46, but not for the expression of FIS2. Probable transcription factor that may function in the maintenance of the proper function of the central cell in pollen tube attraction. The polypeptide is Agamous-like MADS-box protein AGL80 (AGL80) (Arabidopsis thaliana (Mouse-ear cress)).